Consider the following 60-residue polypeptide: uncharacterized protein (60 aa).

The chain crosses the membrane as a helical span at residues 33–55 (FRLLRGIFLITLVIWTVVWLKLL).

Belongs to the HHV-5 UL2 protein family.

The protein localises to the host membrane. This is an uncharacterized protein from Human cytomegalovirus (strain AD169) (HHV-5).